We begin with the raw amino-acid sequence, 632 residues long: Probable potassium transport system protein Kup 1 (632 aa).

12 helical membrane passes run 17-37 (LFYL…TSPL), 60-80 (LISL…VLFL), 106-126 (TAIL…DAMI), 146-166 (LADY…VVQS), 175-195 (FFGP…ISHI), 210-230 (AVAF…AVFL), 254-274 (WFLL…ALVL), 292-312 (ALLP…QAVI), 344-364 (IFVP…VLGF), 370-390 (LATA…IMAF), 401-421 (LPVA…FLGA), and 426-446 (IHDG…VMWT).

It belongs to the HAK/KUP transporter (TC 2.A.72) family.

It is found in the cell inner membrane. It catalyses the reaction K(+)(in) + H(+)(in) = K(+)(out) + H(+)(out). Its function is as follows. Transport of potassium into the cell. Likely operates as a K(+):H(+) symporter. This is Probable potassium transport system protein Kup 1 from Rhizobium johnstonii (strain DSM 114642 / LMG 32736 / 3841) (Rhizobium leguminosarum bv. viciae).